Here is a 119-residue protein sequence, read N- to C-terminus: Ribonuclease P protein component (119 aa).

It belongs to the RnpA family. As to quaternary structure, consists of a catalytic RNA component (M1 or rnpB) and a protein subunit.

The catalysed reaction is Endonucleolytic cleavage of RNA, removing 5'-extranucleotides from tRNA precursor.. In terms of biological role, RNaseP catalyzes the removal of the 5'-leader sequence from pre-tRNA to produce the mature 5'-terminus. It can also cleave other RNA substrates such as 4.5S RNA. The protein component plays an auxiliary but essential role in vivo by binding to the 5'-leader sequence and broadening the substrate specificity of the ribozyme. The protein is Ribonuclease P protein component of Cronobacter sakazakii (strain ATCC BAA-894) (Enterobacter sakazakii).